We begin with the raw amino-acid sequence, 367 residues long: Peptide chain release factor 2 (367 aa).

The residue at position 254 (glutamine 254) is an N5-methylglutamine.

It belongs to the prokaryotic/mitochondrial release factor family. Methylated by PrmC. Methylation increases the termination efficiency of RF2.

It localises to the cytoplasm. Functionally, peptide chain release factor 2 directs the termination of translation in response to the peptide chain termination codons UGA and UAA. This chain is Peptide chain release factor 2, found in Leptospira borgpetersenii serovar Hardjo-bovis (strain JB197).